Consider the following 324-residue polypeptide: MENAKIIGFGLYTPKNLVENERLQEFLETSDEWIRSRTGIERRYISLDENTSDLAVEASKKALNQAGLSAEEIDLIIVATVTPDNFTPSTACIVQDKLGAKNAWAFDINAACTGFIYALKLGRSLIRSGEAKNALIIGAETLSKALNWEDRGSCVLFGDGAGAIVLTSTEEDCGIKCVNVKSDGSKGDSLVIQGLPLNSPFKDGREVSKNYINMNGREIFKFATKVMEESIVEILEKENIKIEDISAIIPHQANLRIIDYVVKRLGIPREKFVTNLQNYGNTSGASIPIALCESINEGNLKKGDNIIMVGFGGGLTWGAALIKL.

Catalysis depends on residues cysteine 112 and histidine 251. The tract at residues 252–256 is ACP-binding; the sequence is QANLR. The active site involves asparagine 281.

It belongs to the thiolase-like superfamily. FabH family. As to quaternary structure, homodimer.

The protein localises to the cytoplasm. It catalyses the reaction malonyl-[ACP] + acetyl-CoA + H(+) = 3-oxobutanoyl-[ACP] + CO2 + CoA. The protein operates within lipid metabolism; fatty acid biosynthesis. Its function is as follows. Catalyzes the condensation reaction of fatty acid synthesis by the addition to an acyl acceptor of two carbons from malonyl-ACP. Catalyzes the first condensation reaction which initiates fatty acid synthesis and may therefore play a role in governing the total rate of fatty acid production. Possesses both acetoacetyl-ACP synthase and acetyl transacylase activities. Its substrate specificity determines the biosynthesis of branched-chain and/or straight-chain of fatty acids. In Clostridium perfringens (strain SM101 / Type A), this protein is Beta-ketoacyl-[acyl-carrier-protein] synthase III.